The chain runs to 475 residues: C3a anaphylatoxin chemotactic receptor (475 aa).

The Extracellular segment spans residues 1 to 23; that stretch reads MESSSAETNSTGLHLEPQYQPET. A glycan (N-linked (GlcNAc...) asparagine) is linked at Asn-9. Residues 24-46 form a helical membrane-spanning segment; it reads ILAMAILGLTFVLGLPGNGLVLW. Topologically, residues 47-57 are cytoplasmic; it reads VAGLKMRRTVN. Residues 58–80 form a helical membrane-spanning segment; sequence TVWFLHLTVADFVCCLSLPFSMA. Over 81–96 the chain is Extracellular; sequence HLALRGYWPYGEILCK. Cys-95 and Cys-172 are joined by a disulfide. Residues 97-118 traverse the membrane as a helical segment; it reads FIPTVIIFNMFASVFLLTAISL. Topologically, residues 119-139 are cytoplasmic; it reads DRCLMVLKPIWCQNHRNVRTA. The chain crosses the membrane as a helical span at residues 140 to 160; the sequence is CIICGCIWLVAFVLCIPVFVY. Residues 161–331 are Extracellular-facing; it reads RETFTLENHT…RLLKVITFTR (171 aa). N-linked (GlcNAc...) asparagine glycosylation is present at Asn-168. Tyr-174 and Tyr-183 each carry sulfotyrosine. Asn-273 and Asn-292 each carry an N-linked (GlcNAc...) asparagine glycan. Residues 332 to 351 traverse the membrane as a helical segment; it reads LVVGFLLPMIIMVACYTLII. Residues 352 to 368 are Cytoplasmic-facing; that stretch reads FRMRRVRVVKSWNKALH. The helical transmembrane segment at 369 to 391 threads the bilayer; the sequence is LAMVVVTIFLICWAPYHVFGVLI. Residues 392–408 are Extracellular-facing; sequence LFINPESRVGAALLSWD. A helical membrane pass occupies residues 409 to 429; the sequence is HVSIALASANSCFNPFLYALL. The Cytoplasmic segment spans residues 430-475; it reads GRDLRKRVRQSMKGILEAAFSEDISKSTSFIQAKAFSEKHSLSTNV. Ser-450 bears the Phosphoserine mark.

The protein belongs to the G-protein coupled receptor 1 family. In terms of assembly, interacts with VGF-derived peptide TLQP-21. In terms of tissue distribution, expressed in the heart, kidney, lung, liver, peritoneal macrophages and spleen.

Its subcellular location is the cell membrane. Receptor for the chemotactic and inflammatory peptide anaphylatoxin C3a. This receptor stimulates chemotaxis, granule enzyme release and superoxide anion production. The chain is C3a anaphylatoxin chemotactic receptor (C3AR1) from Cavia porcellus (Guinea pig).